The chain runs to 509 residues: Cobyric acid synthase (509 aa).

Residues 262-459 (EIKVGIIKLP…IHGIFENDNW (198 aa)) enclose the GATase cobBQ-type domain. The Nucleophile role is filled by Cys343. The active site involves His451.

It belongs to the CobB/CobQ family. CobQ subfamily.

It functions in the pathway cofactor biosynthesis; adenosylcobalamin biosynthesis. Its function is as follows. Catalyzes amidations at positions B, D, E, and G on adenosylcobyrinic A,C-diamide. NH(2) groups are provided by glutamine, and one molecule of ATP is hydrogenolyzed for each amidation. The chain is Cobyric acid synthase from Prochlorococcus marinus (strain AS9601).